The chain runs to 672 residues: Methionine--tRNA ligase (672 aa).

A 'HIGH' region motif is present at residues 12–22 (AYTNGPLHLGH). Residues Cys-144, Cys-147, Cys-156, and Cys-159 each coordinate Zn(2+). Residues 330–334 (KMSTS) carry the 'KMSKS' region motif. Position 333 (Thr-333) interacts with ATP. In terms of domain architecture, tRNA-binding spans 573 to 672 (DFAKIELKVA…KDLPVGSTIC (100 aa)).

This sequence belongs to the class-I aminoacyl-tRNA synthetase family. MetG type 1 subfamily. As to quaternary structure, homodimer. Zn(2+) is required as a cofactor.

It localises to the cytoplasm. The catalysed reaction is tRNA(Met) + L-methionine + ATP = L-methionyl-tRNA(Met) + AMP + diphosphate. Is required not only for elongation of protein synthesis but also for the initiation of all mRNA translation through initiator tRNA(fMet) aminoacylation. The chain is Methionine--tRNA ligase from Methanococcus aeolicus (strain ATCC BAA-1280 / DSM 17508 / OCM 812 / Nankai-3).